A 402-amino-acid chain; its full sequence is DNA primase DnaG (402 aa).

A Toprim domain is found at 165-243; the sequence is PNLIIVEGRA…KIDFVARAPV (79 aa). Residues Glu-171, Asp-216, and Asp-218 each coordinate Mg(2+).

It belongs to the archaeal DnaG primase family. Forms a ternary complex with MCM helicase and DNA. Component of the archaeal exosome complex. It depends on Mg(2+) as a cofactor.

It catalyses the reaction ssDNA + n NTP = ssDNA/pppN(pN)n-1 hybrid + (n-1) diphosphate.. Functionally, RNA polymerase that catalyzes the synthesis of short RNA molecules used as primers for DNA polymerase during DNA replication. Also part of the exosome, which is a complex involved in RNA degradation. Acts as a poly(A)-binding protein that enhances the interaction between heteromeric, adenine-rich transcripts and the exosome. The chain is DNA primase DnaG from Saccharolobus islandicus (strain Y.N.15.51 / Yellowstone #2) (Sulfolobus islandicus).